Consider the following 215-residue polypeptide: Large ribosomal subunit protein uL3 (215 aa).

The tract at residues 136 to 155 is disordered; that stretch reads GVSISHRSHGSTGQRQDPGK. Position 151 is an N5-methylglutamine (Q151).

It belongs to the universal ribosomal protein uL3 family. Part of the 50S ribosomal subunit. Forms a cluster with proteins L14 and L19. In terms of processing, methylated by PrmB.

In terms of biological role, one of the primary rRNA binding proteins, it binds directly near the 3'-end of the 23S rRNA, where it nucleates assembly of the 50S subunit. The protein is Large ribosomal subunit protein uL3 of Rickettsia felis (strain ATCC VR-1525 / URRWXCal2) (Rickettsia azadi).